Here is a 476-residue protein sequence, read N- to C-terminus: CDK5 and ABL1 enzyme substrate 2 (476 aa).

The segment at 1-119 (MAAAAAGGAP…GLGLDGQRQR (119 aa)) is disordered. A compositionally biased stretch (basic residues) spans 30-40 (PRRRGDSRRRQ). Over residues 65 to 96 (PAPPPPPPTEAREAPAPPPAPPGGLPGLPARP) the composition is skewed to pro residues. Ser128 and Ser206 each carry phosphoserine. A disordered region spans residues 256–295 (DSHGLLPQPRPSIPRAPPGSRHKPVPTKSTPAGTELGSDG). Positions 263–272 (QPRPSIPRAP) are enriched in pro residues.

It belongs to the cyclin family. In terms of assembly, binds to CDK3, CDK5 and ABL1. The C-terminal cyclin-box-like region binds to CDK5. As to expression, widely expressed.

Unknown. Probably involved in G1-S cell cycle transition. This chain is CDK5 and ABL1 enzyme substrate 2 (Cables2), found in Mus musculus (Mouse).